A 475-amino-acid chain; its full sequence is Sulfate adenylyltransferase subunit 1 (475 aa).

In terms of domain architecture, tr-type G spans 25-239 (KSLLRFLTCG…EVLETVEIQR (215 aa)). A G1 region spans residues 34–41 (GSVDDGKS). 34–41 (GSVDDGKS) is a binding site for GTP. The tract at residues 92-96 (GITID) is G2. The interval 113–116 (DTPG) is G3. GTP is bound by residues 113–117 (DTPGH) and 168–171 (NKMD). Residues 168–171 (NKMD) form a G4 region. The tract at residues 206 to 208 (SAL) is G5.

This sequence belongs to the TRAFAC class translation factor GTPase superfamily. Classic translation factor GTPase family. CysN/NodQ subfamily. In terms of assembly, heterodimer composed of CysD, the smaller subunit, and CysN.

It catalyses the reaction sulfate + ATP + H(+) = adenosine 5'-phosphosulfate + diphosphate. It functions in the pathway sulfur metabolism; hydrogen sulfide biosynthesis; sulfite from sulfate: step 1/3. Its function is as follows. With CysD forms the ATP sulfurylase (ATPS) that catalyzes the adenylation of sulfate producing adenosine 5'-phosphosulfate (APS) and diphosphate, the first enzymatic step in sulfur assimilation pathway. APS synthesis involves the formation of a high-energy phosphoric-sulfuric acid anhydride bond driven by GTP hydrolysis by CysN coupled to ATP hydrolysis by CysD. The sequence is that of Sulfate adenylyltransferase subunit 1 from Escherichia coli (strain SE11).